The primary structure comprises 362 residues: Homeobox protein Nkx-2.3 (362 aa).

Disordered regions lie at residues 126–149 (EAAGDCKTSEDGERPKPRSRRKPR) and 203–222 (QRQDKSLELGTHAPPPPPRR). Basic and acidic residues predominate over residues 132–141 (KTSEDGERPK). Residues 145–204 (RRKPRVLFSQAQVFELERRFKQQRYLSAPEREHLASSLKLTSTQVKIWFQNRRYKCKRQR) constitute a DNA-binding region (homeobox).

It belongs to the NK-2 homeobox family. Expressed in spleen and intestine. Also expressed in salivary gland and tongue.

It is found in the nucleus. Functionally, transcriptional regulator essential for normal development and functions of the small intestine and spleen. Activates directly MADCAM1 expression. Required for homing of lymphocytes in spleen and mucosa-associated lymphoid tissue. May have a role during pharyngeal organogenesis. The sequence is that of Homeobox protein Nkx-2.3 (Nkx2-3) from Mus musculus (Mouse).